A 546-amino-acid chain; its full sequence is Pre-mRNA-splicing factor 38B (546 aa).

Polar residues predominate over residues 1–14 (MANNSPALTGNSQP). The tract at residues 1-40 (MANNSPALTGNSQPQHQAAAAAAQQQQQCGGGGATKPAVS) is disordered. Position 2 is an N-acetylalanine (Ala-2). The residue at position 5 (Ser-5) is a Phosphoserine. Residues 15-28 (QHQAAAAAAQQQQQ) are compositionally biased toward low complexity. Lys-227 carries the N6-acetyllysine modification. The segment at 229–546 (IDQQIKTRPR…KQHKNKDETV (318 aa)) is disordered. Over residues 243-255 (DGKEGAEEIDRHV) the composition is skewed to basic and acidic residues. Over residues 256 to 284 (ERRRSRSPRRSLSPRRSPRRSRSRSHHRE) the composition is skewed to basic residues. Ser-288, Ser-290, Ser-318, and Ser-320 each carry phosphoserine. The span at 291-327 (FDRELEREKERQRLEREAKEREKERRRSRSIDRGLER) shows a compositional bias: basic and acidic residues. Positions 292–321 (DRELEREKERQRLEREAKEREKERRRSRSI) form a coiled coil. Basic residues predominate over residues 328-344 (RRSRSRERHRSRSRSRD). The span at 345–421 (RKGDRRDRDR…HRDDKRDSKK (77 aa)) shows a compositional bias: basic and acidic residues. Basic residues predominate over residues 422–450 (EKKHSRSRSRERKHRSRSRSRNAGKRSRS). At Ser-448 the chain carries Phosphoserine. Basic and acidic residues predominate over residues 451–468 (RSKEKSSKHKNESKEKSN). Phosphoserine occurs at positions 473, 475, and 481. The segment covering 480-495 (DSVEKSKKREHSPSKE) has biased composition (basic and acidic residues). Over residues 496-510 (KSRKRSRSKERSHKR) the composition is skewed to basic residues. Residues 511-546 (DHSDSKDQSDKHDRRRSQSIEQESQEKQHKNKDETV) are compositionally biased toward basic and acidic residues. Phosphoserine occurs at positions 527, 529, and 534.

It belongs to the PRP38 family.

The protein resides in the nucleus. Its function is as follows. May be required for pre-mRNA splicing. This is Pre-mRNA-splicing factor 38B (PRPF38B) from Homo sapiens (Human).